A 129-amino-acid polypeptide reads, in one-letter code: MAKDYSRTQRIGDQMQRELAQLIQREIKDPRLGLVTITGVEVSRDVAHAKVFITVMGQDDAGKIALNMEILNDAAGYLRMLLGKSMKLRSVPQLHFHYDESIRRGAELSALIERAVAEDGRRHGDETED.

Belongs to the RbfA family. Monomer. Binds 30S ribosomal subunits, but not 50S ribosomal subunits or 70S ribosomes.

The protein localises to the cytoplasm. Functionally, one of several proteins that assist in the late maturation steps of the functional core of the 30S ribosomal subunit. Associates with free 30S ribosomal subunits (but not with 30S subunits that are part of 70S ribosomes or polysomes). Required for efficient processing of 16S rRNA. May interact with the 5'-terminal helix region of 16S rRNA. In Pseudomonas aeruginosa (strain UCBPP-PA14), this protein is Ribosome-binding factor A.